Reading from the N-terminus, the 140-residue chain is Small ribosomal subunit protein uS12 (140 aa).

The segment at 33–55 (KEQTNVSSPQKRGVCTRVGTMTP) is disordered. Asp102 carries the post-translational modification 3-methylthioaspartic acid.

It belongs to the universal ribosomal protein uS12 family. Part of the 30S ribosomal subunit. Contacts proteins S8 and S17. May interact with IF1 in the 30S initiation complex.

In terms of biological role, with S4 and S5 plays an important role in translational accuracy. Functionally, interacts with and stabilizes bases of the 16S rRNA that are involved in tRNA selection in the A site and with the mRNA backbone. Located at the interface of the 30S and 50S subunits, it traverses the body of the 30S subunit contacting proteins on the other side and probably holding the rRNA structure together. The combined cluster of proteins S8, S12 and S17 appears to hold together the shoulder and platform of the 30S subunit. The chain is Small ribosomal subunit protein uS12 from Geobacillus thermodenitrificans (strain NG80-2).